Reading from the N-terminus, the 327-residue chain is Serpentine receptor class alpha-33 (327 aa).

Transmembrane regions (helical) follow at residues 20 to 40 (FSVYFIDTSCIISMAVTVLAI), 56 to 76 (LLITDLVFINIHNLSYIFLQN), 133 to 153 (FSHANYGFLLAILSLIASTVF), 186 to 206 (IIPYLAICLTSIVCSLLLIIY), 227 to 247 (AVVSSISVAILGIIQLVLFCF), and 270 to 290 (IIGWFYTSPLNAIISPTAVFL).

The protein belongs to the nematode receptor-like protein sra family.

It localises to the membrane. The protein is Serpentine receptor class alpha-33 (sra-33) of Caenorhabditis elegans.